We begin with the raw amino-acid sequence, 113 residues long: Large ribosomal subunit protein P1 (113 aa).

Low complexity predominate over residues 56-66 (TAAAAPAPAAG). Residues 56–113 (TAAAAPAPAAGGSAGGEVEAADDDDEEDAEEEAADEGGDDDGDDDEEADGEGLGALFG) are disordered. A compositionally biased stretch (acidic residues) spans 74–105 (EAADDDDEEDAEEEAADEGGDDDGDDDEEADG).

Belongs to the eukaryotic ribosomal protein P1/P2 family. As to quaternary structure, part of the 50S ribosomal subunit. Homodimer, it forms part of the ribosomal stalk which helps the ribosome interact with GTP-bound translation factors. Forms a heptameric uL10/P0(P1)2(P1)2(P1)2 complex, where uL10/P0 forms an elongated spine to which the P1 dimers bind in a sequential fashion.

In terms of biological role, forms part of the ribosomal stalk, playing a central role in the interaction of the ribosome with GTP-bound translation factors. This chain is Large ribosomal subunit protein P1, found in Haloferax volcanii (strain ATCC 29605 / DSM 3757 / JCM 8879 / NBRC 14742 / NCIMB 2012 / VKM B-1768 / DS2) (Halobacterium volcanii).